The chain runs to 190 residues: Large ribosomal subunit protein uL6 (190 aa).

This sequence belongs to the universal ribosomal protein uL6 family.

The sequence is that of Large ribosomal subunit protein uL6 (RpL9) from Spodoptera frugiperda (Fall armyworm).